The primary structure comprises 158 residues: S-ribosylhomocysteine lyase (158 aa).

Fe cation-binding residues include His55, His59, and Cys127.

The protein belongs to the LuxS family. Homodimer. The cofactor is Fe cation.

It carries out the reaction S-(5-deoxy-D-ribos-5-yl)-L-homocysteine = (S)-4,5-dihydroxypentane-2,3-dione + L-homocysteine. Its function is as follows. Involved in the synthesis of autoinducer 2 (AI-2) which is secreted by bacteria and is used to communicate both the cell density and the metabolic potential of the environment. The regulation of gene expression in response to changes in cell density is called quorum sensing. Catalyzes the transformation of S-ribosylhomocysteine (RHC) to homocysteine (HC) and 4,5-dihydroxy-2,3-pentadione (DPD). The protein is S-ribosylhomocysteine lyase of Geobacillus thermodenitrificans (strain NG80-2).